The sequence spans 246 residues: 14-3-3 protein beta/alpha (246 aa).

M1 is subject to N-acetylmethionine; in 14-3-3 protein beta/alpha; alternate. M1 is subject to N-acetylmethionine. T2 is subject to N-acetylthreonine; in 14-3-3 protein beta/alpha, N-terminally processed. At T2 the chain carries Phosphothreonine. K5 carries the N6-acetyllysine modification. At K51 the chain carries N6-acetyllysine; alternate. Residue K51 forms a Glycyl lysine isopeptide (Lys-Gly) (interchain with G-Cter in SUMO2); alternate linkage. At S60 the chain carries Phosphoserine. The residue at position 70 (K70) is an N6-acetyllysine. 3'-nitrotyrosine occurs at positions 84 and 106. At K117 the chain carries N6-acetyllysine. Phosphoserine is present on residues S186 and S232.

The protein belongs to the 14-3-3 family. Homodimer. Interacts with SAMSN1 and PRKCE. Interacts with AKAP13. Interacts with SSH1 and TORC2/CRTC2. Interacts with ABL1; the interaction results in cytoplasmic location of ABL1 and inhibition of cABL-mediated apoptosis. Interacts with ROR2 (dimer); the interaction results in phosphorylation of YWHAB on tyrosine residues. Interacts with GAB2. Interacts with YAP1 (phosphorylated form). Interacts with the phosphorylated (by AKT1) form of SRPK2. Interacts with PKA-phosphorylated AANAT. Interacts with MYO1C. Interacts with SIRT2. Interacts with the 'Thr-369' phosphorylated form of DAPK2. Interacts with PI4KB, TBC1D22A and TBC1D22B. Interacts with the 'Ser-1134' and 'Ser-1161' phosphorylated form of SOS1. Interacts (via phosphorylated form) with YWHAB; this interaction occurs in a protein kinase AKT1-dependent manner. Interacts with SLITRK1. Interacts with SYNPO2 (phosphorylated form); YWHAB competes with ACTN2 for interaction with SYNPO2. Interacts with RIPOR2 (via phosphorylated form) isoform 2; this interaction occurs in a chemokine-dependent manner and does not compete for binding of RIPOR2 with RHOA nor blocks inhibition of RIPOR2-mediated RHOA activity. Interacts with MARK2 and MARK3. Interacts with TESK1; the interaction is dependent on the phosphorylation of TESK1 'Ser-437' and inhibits TESK1 kinase activity. Interacts with MEFV. Interacts with HDAC4. Interacts with ADAM22 (via C-terminus). In terms of assembly, (Microbial infection) Interacts with herpes simplex virus 1 protein UL46. As to quaternary structure, (Microbial infection) Probably interacts with Chlamydia trachomatis protein IncG. The alpha, brain-specific form differs from the beta form in being phosphorylated. Phosphorylated on Ser-60 by protein kinase C delta type catalytic subunit in a sphingosine-dependent fashion.

It is found in the cytoplasm. Its subcellular location is the melanosome. The protein resides in the vacuole membrane. Adapter protein implicated in the regulation of a large spectrum of both general and specialized signaling pathways. Binds to a large number of partners, usually by recognition of a phosphoserine or phosphothreonine motif. Binding generally results in the modulation of the activity of the binding partner. Negative regulator of osteogenesis. Blocks the nuclear translocation of the phosphorylated form (by AKT1) of SRPK2 and antagonizes its stimulatory effect on cyclin D1 expression resulting in blockage of neuronal apoptosis elicited by SRPK2. Negative regulator of signaling cascades that mediate activation of MAP kinases via AKAP13. The chain is 14-3-3 protein beta/alpha (YWHAB) from Homo sapiens (Human).